A 316-amino-acid polypeptide reads, in one-letter code: tRNA dimethylallyltransferase (316 aa).

17–24 (GPTASGKT) provides a ligand contact to ATP. Substrate is bound at residue 19–24 (TASGKT). 4 interaction with substrate tRNA regions span residues 42–45 (DSAL), 166–170 (QRLSR), 247–252 (RCVGYR), and 280–287 (KRQITWLR).

Belongs to the IPP transferase family. As to quaternary structure, monomer. The cofactor is Mg(2+).

The enzyme catalyses adenosine(37) in tRNA + dimethylallyl diphosphate = N(6)-dimethylallyladenosine(37) in tRNA + diphosphate. Catalyzes the transfer of a dimethylallyl group onto the adenine at position 37 in tRNAs that read codons beginning with uridine, leading to the formation of N6-(dimethylallyl)adenosine (i(6)A). The polypeptide is tRNA dimethylallyltransferase (Shigella flexneri serotype 5b (strain 8401)).